Reading from the N-terminus, the 254-residue chain is 3-deoxy-manno-octulosonate cytidylyltransferase (254 aa).

Belongs to the KdsB family.

The protein resides in the cytoplasm. It carries out the reaction 3-deoxy-alpha-D-manno-oct-2-ulosonate + CTP = CMP-3-deoxy-beta-D-manno-octulosonate + diphosphate. The protein operates within nucleotide-sugar biosynthesis; CMP-3-deoxy-D-manno-octulosonate biosynthesis; CMP-3-deoxy-D-manno-octulosonate from 3-deoxy-D-manno-octulosonate and CTP: step 1/1. Its pathway is bacterial outer membrane biogenesis; lipopolysaccharide biosynthesis. In terms of biological role, activates KDO (a required 8-carbon sugar) for incorporation into bacterial lipopolysaccharide in Gram-negative bacteria. The chain is 3-deoxy-manno-octulosonate cytidylyltransferase from Pseudoalteromonas atlantica (strain T6c / ATCC BAA-1087).